Consider the following 554-residue polypeptide: Carboxypeptidase Y homolog A (554 aa).

Positions 1 to 17 (MRVAASTVLLGVASAAS) are cleaved as a signal peptide. The propeptide occupies 18–137 (FQQQTQHVLS…KLADFNLRVK (120 aa)). 5 disulfides stabilise this stretch: cysteine 191/cysteine 431, cysteine 325/cysteine 339, cysteine 349/cysteine 372, cysteine 356/cysteine 365, and cysteine 394/cysteine 401. N-linked (GlcNAc...) asparagine glycosylation is present at asparagine 222. Serine 278 is an active-site residue. Residue aspartate 470 is part of the active site. N-linked (GlcNAc...) asparagine glycosylation occurs at asparagine 518. Histidine 529 is a catalytic residue.

The protein belongs to the peptidase S10 family.

The protein resides in the vacuole. It catalyses the reaction Release of a C-terminal amino acid with broad specificity.. Functionally, vacuolar carboxypeptidase involved in degradation of small peptides. Digests preferentially peptides containing an aliphatic or hydrophobic residue in P1' position, as well as methionine, leucine or phenylalanine in P1 position of ester substrate. The protein is Carboxypeptidase Y homolog A (CPYA) of Podospora anserina (strain S / ATCC MYA-4624 / DSM 980 / FGSC 10383) (Pleurage anserina).